The chain runs to 63 residues: Sperm protamine P1 (63 aa).

Positions 1-63 are disordered; that stretch reads MARYRRHSRS…RYSRRGRRRY (63 aa).

Belongs to the protamine P1 family. As to expression, testis.

It is found in the nucleus. The protein localises to the chromosome. Functionally, protamines substitute for histones in the chromatin of sperm during the haploid phase of spermatogenesis. They compact sperm DNA into a highly condensed, stable and inactive complex. The polypeptide is Sperm protamine P1 (PRM1) (Pseudantechinus macdonnellensis (Fat-tailed marsupial mouse)).